The sequence spans 471 residues: Tetratricopeptide repeat protein 29 (471 aa).

TPR repeat units lie at residues D92 to E131, Y136 to I173, A182 to R215, V234 to G267, G274 to L307, G314 to N347, and I354 to L387. Residues A449–Q471 form a disordered region.

In terms of tissue distribution, expressed in spermatozoa (at protein level).

Its subcellular location is the cytoplasm. It is found in the cytoskeleton. The protein localises to the flagellum axoneme. Axonemal protein which is implicated in axonemal and/or peri-axonemal structure assembly and regulates flagellum assembly and beating and therefore sperm motility. This Mus musculus (Mouse) protein is Tetratricopeptide repeat protein 29 (Ttc29).